We begin with the raw amino-acid sequence, 236 residues long: MATRAATKMAGKKEHQYCLLDTQEKRHGHYPFSFELKPYGQTGANIIGVQGSLTHVVKMTVFPFMIPFPLQKTRIGDFIGGRVYLFFKELDMQAFSDVNGMQYHFEFKVVPVSSSQVELLPVNNTYKFTYAIPELQYLTPIFYDLSGPLDFPLDTLSVHVDSLTHHIHLPIQNHNLTMGDRVFVSGYKHLQTIETCKNNIIFIKDIPPLSSEKINLYIPKNRIRIPLYFKSLKASK.

It belongs to the asfivirus H240R family.

Its subcellular location is the virion. Its function is as follows. Forms the penton at the fivefold vertices of the icosahedral capsid. Together with the minor capsid proteins (p17, p49, and M1249L), forms a complicated network immediately below the outer capsid shell, stabilizing the whole capsid. In African swine fever virus (isolate Pig/Kenya/KEN-50/1950) (ASFV), this protein is Penton protein H240R.